The chain runs to 187 residues: Ribosome-recycling factor (187 aa).

This sequence belongs to the RRF family.

The protein resides in the cytoplasm. Its function is as follows. Responsible for the release of ribosomes from messenger RNA at the termination of protein biosynthesis. May increase the efficiency of translation by recycling ribosomes from one round of translation to another. This is Ribosome-recycling factor from Paracoccus zeaxanthinifaciens.